The sequence spans 412 residues: Keratin, type I microfibrillar 48 kDa, component 8C-1 (412 aa).

At S1 the chain carries N-acetylserine. The interval 1 to 55 (SFNFCLPNLSFRSSCSSRPCVPSSCCGTTLPGACNIPANVGSCNWFCEGSFDGNE) is head. One can recognise an IF rod domain in the interval 55–366 (EKETMQFLND…GLLDSEDCKL (312 aa)). Residues 56 to 90 (KETMQFLNDRLASYLEKVRQLERENAELESRILER) form a coil 1A region. The tract at residues 91 to 101 (SQQQEPLVCPN) is linker 1. A coil 1B region spans residues 102-202 (YQSYFRTIEE…HEEEVNTLRS (101 aa)). Residues 203-218 (QLGDRLNVEVDAAPTV) are linker 12. The coil 2 stretch occupies residues 219 to 362 (DLNRVLNETR…NTYRGLLDSE (144 aa)). Residues 363-412 (DCKLPCNPCATTNACGKTITPCISSPCAPAAPCTPCVPRSRCGPCNSYVR) form a tail region.

It belongs to the intermediate filament family.

Its function is as follows. Wool microfibrillar keratin. The polypeptide is Keratin, type I microfibrillar 48 kDa, component 8C-1 (Ovis aries (Sheep)).